A 131-amino-acid polypeptide reads, in one-letter code: Nitrogenase-stabilizing/protective protein NifW (131 aa).

This sequence belongs to the NifW family. As to quaternary structure, homotrimer; associates with NifD.

In terms of biological role, may protect the nitrogenase Fe-Mo protein from oxidative damage. The chain is Nitrogenase-stabilizing/protective protein NifW from Frankia alni (strain DSM 45986 / CECT 9034 / ACN14a).